Here is a 230-residue protein sequence, read N- to C-terminus: MSSPTTPVPVISWTADEAIKFLKEWNFSLGIIVLFITIILQFGYTSRSMFVYVIKMVILWLMWPLTIILTIFNCVYALNNVYLGFSIVFTIVAIIMWVVYFVNSIRLFIRTGSWWSFNPETNNLMCIDMKGRMYVRPIIEDYHTLTATIIRGHLYIQGIKLGTGYSLSDLPAYVTVAKVTHLCTYKRGFLDRIGDTSGFAVYVKSKVGNYRLPSTHKGSGMDTALLRNNI.

Over methionine 1–glutamate 24 the chain is Virion surface. The helical transmembrane segment at tryptophan 25 to threonine 45 threads the bilayer. Topologically, residues serine 46–lysine 55 are intravirion. The helical transmembrane segment at methionine 56–tyrosine 76 threads the bilayer. The Virion surface segment spans residues alanine 77 to glycine 84. The helical transmembrane segment at phenylalanine 85–isoleucine 105 threads the bilayer. The Intravirion segment spans residues arginine 106–asparagine 228.

It belongs to the betacoronaviruses M protein family. In terms of assembly, homomultimer. Interacts with envelope E protein in the budding compartment of the host cell, which is located between endoplasmic reticulum and the Golgi complex. Forms a complex with HE and S proteins. Interacts with nucleocapsid N protein. This interaction probably participates in RNA packaging into the virus.

Its subcellular location is the virion membrane. The protein localises to the host Golgi apparatus membrane. Functionally, component of the viral envelope that plays a central role in virus morphogenesis and assembly via its interactions with other viral proteins. This chain is Membrane protein, found in Porcine hemagglutinating encephalomyelitis virus (strain 67N) (HEV-67N).